The primary structure comprises 462 residues: MSSVKRSPKQEIVTQFHCSAAEGDIAKLTGILSHSPSLLNETSENGWTALMYAARNGHPEIVQFLLEKGCDRSIVNKSRQTALDIAVFWGYKHIANLLATAKGGKKPWFLTNEVEECENYFSKTLLDRKSEKRNNADWLLAKESHPATVFILFSDLNPLVTLGGNKESFQQPEVRLCQLNYKDIKDYLAQPEEITLIFLGVELEMKDKLLNYAGEVPREEEDGLVAWFALGIDPIAAEEFKQRHENCYFLHPPMPALLQLKEKEAGVVAQARSVLAWHSRYKFCPTCGNGTKIEEGGYKRVCLKEDCPSLNGVHNTSYPRVDPVVIMQVIHPDGTRCLLGRQKRFPPGMFTCLAGFIEPGETIEDAVRREVEEESGVKVGHVQYVSCQPWPMPSSLMIGCLAVAVSTEIKVDKNEIEDARWFTREQVLDVLTKGKQQAFFVPPSRAIAHQLIKHWIRINPNL.

ANK repeat units lie at residues 11-40 (EIVTQFHCSAAEGDIAKLTGILSHSPSLLN), 45-74 (NGWTALMYAARNGHPEIVQFLLEKGCDRSI), and 78-98 (SRQTALDIAVFWGYKHIANLL). Lys-185 carries the post-translational modification N6-succinyllysine. Zn(2+)-binding residues include Cys-284 and Cys-287. Lys-292 is modified (N6-succinyllysine). Zn(2+) contacts are provided by Cys-302 and Cys-307. Substrate-binding positions include Tyr-318, 354-356 (AGF), Glu-370, Glu-374, and Glu-415. Positions 319 to 453 (PRVDPVVIMQ…SRAIAHQLIK (135 aa)) constitute a Nudix hydrolase domain. Residues Ala-354, Glu-370, Glu-374, and Glu-415 each coordinate Mg(2+). A Nudix box motif is present at residues 355 to 376 (GFIEPGETIEDAVRREVEEESG). A Microbody targeting signal motif is present at residues 460-462 (PNL).

Belongs to the Nudix hydrolase family. NudC subfamily. As to quaternary structure, homodimer. Homodimerization is essential for its catalytic activity and protein stability. Interacts (via ANK repeats) with BLMH. Requires Mg(2+) as cofactor. Zn(2+) is required as a cofactor.

It is found in the cytoplasm. The protein resides in the peroxisome. Its subcellular location is the cytoplasmic granule. It carries out the reaction a 5'-end NAD(+)-phospho-ribonucleoside in mRNA + H2O = a 5'-end phospho-adenosine-phospho-ribonucleoside in mRNA + beta-nicotinamide D-ribonucleotide + 2 H(+). It catalyses the reaction NAD(+) + H2O = beta-nicotinamide D-ribonucleotide + AMP + 2 H(+). The catalysed reaction is NADH + H2O = reduced beta-nicotinamide D-ribonucleotide + AMP + 2 H(+). The enzyme catalyses NADPH + H2O = reduced beta-nicotinamide D-ribonucleotide + adenosine 2',5'-bisphosphate + 2 H(+). Functionally, mRNA decapping enzyme that specifically removes the nicotinamide adenine dinucleotide (NAD) cap from a subset of mRNAs by hydrolyzing the diphosphate linkage to produce nicotinamide mononucleotide (NMN) and 5' monophosphate mRNA. The NAD-cap is present at the 5'-end of some RNAs; in contrast to the canonical N7 methylguanosine (m7G) cap, the NAD cap promotes mRNA decay. Preferentially acts on NAD-capped transcripts in response to nutrient stress. Also acts on free nicotinamide adenine dinucleotide molecules: hydrolyzes NAD(H) into NMN(H) and AMP, and NADPH into NMNH and 2',5'-ADP. May act to regulate the concentration of peroxisomal nicotinamide nucleotide cofactors required for oxidative metabolism in this organelle. Regulates the levels of circadian clock components PER1, PER2, PER3 and CRY2 in the liver. The chain is NAD-capped RNA hydrolase NUDT12 from Macaca fascicularis (Crab-eating macaque).